Reading from the N-terminus, the 89-residue chain is Small ribosomal subunit protein bS20 (89 aa).

The segment covering 1–12 has biased composition (basic residues); the sequence is MANIKSAKKRAK. The disordered stretch occupies residues 1 to 24; sequence MANIKSAKKRAKQTVVRNERNTGQ.

It belongs to the bacterial ribosomal protein bS20 family.

Its function is as follows. Binds directly to 16S ribosomal RNA. This is Small ribosomal subunit protein bS20 from Xanthomonas campestris pv. campestris (strain 8004).